The sequence spans 637 residues: Threonine--tRNA ligase (637 aa).

Positions 1 to 61 constitute a TGS domain; sequence MPNVKLPDGN…KEDCSLIIVT (61 aa). Residues 242 to 533 are catalytic; the sequence is DHRKLGKALD…LIEHYAGKLP (292 aa). Zn(2+) is bound by residues C333, H384, and H510.

It belongs to the class-II aminoacyl-tRNA synthetase family. As to quaternary structure, homodimer. It depends on Zn(2+) as a cofactor.

It is found in the cytoplasm. It carries out the reaction tRNA(Thr) + L-threonine + ATP = L-threonyl-tRNA(Thr) + AMP + diphosphate + H(+). Functionally, catalyzes the attachment of threonine to tRNA(Thr) in a two-step reaction: L-threonine is first activated by ATP to form Thr-AMP and then transferred to the acceptor end of tRNA(Thr). Also edits incorrectly charged L-seryl-tRNA(Thr). This Legionella pneumophila subsp. pneumophila (strain Philadelphia 1 / ATCC 33152 / DSM 7513) protein is Threonine--tRNA ligase.